Consider the following 424-residue polypeptide: Protein ORF114 (424 aa).

Its subcellular location is the host cytoplasm. In terms of biological role, plays a role in per os infectivity in vivo. Facilitates embedding of occlusion-derived viruses (ODVs) into occlusion bodies (OBs). This is Protein ORF114 from Lepidoptera (butterflies and moths).